The sequence spans 443 residues: Dihydroorotate dehydrogenase (quinone), mitochondrial (443 aa).

The transit peptide at 1–21 (MYQRSLFRGVAQGLKRSSVRF) directs the protein to the mitochondrion. Residues 38–54 (WKLLSVIGSFTAGVAIY) form a helical membrane-spanning segment. FMN contacts are provided by residues 122-126 (AGFDK) and Ser-146. Lys-126 provides a ligand contact to substrate. The residue at position 168 (Ser-168) is a Phosphoserine. Substrate is bound at residue 171–175 (NRYGF). FMN is bound by residues Asn-234 and Asn-264. 264-269 (NVSSPN) lines the substrate pocket. Ser-267 functions as the Nucleophile in the catalytic mechanism. Lys-306 contacts FMN. 335-336 (NT) serves as a coordination point for substrate. FMN is bound by residues Gly-358, Gly-387, and 408–409 (YT).

It belongs to the dihydroorotate dehydrogenase family. Type 2 subfamily. It depends on FMN as a cofactor.

The protein resides in the mitochondrion inner membrane. The enzyme catalyses (S)-dihydroorotate + a quinone = orotate + a quinol. It participates in pyrimidine metabolism; UMP biosynthesis via de novo pathway; orotate from (S)-dihydroorotate (quinone route): step 1/1. In the de novo pyrimidine biosynthesis pathway, catalyzes the stereospecific oxidation of (S)-dihydroorotate to orotate with reduction of flavin and the transfer of electrons to ubiquinone, which is part of the respiratory chain. Does not use fumarate and NAD as electron acceptors. This is Dihydroorotate dehydrogenase (quinone), mitochondrial (ura3) from Schizosaccharomyces pombe (strain 972 / ATCC 24843) (Fission yeast).